The primary structure comprises 345 residues: Protein-glutamate methylesterase/protein-glutamine glutaminase 2 (345 aa).

A Response regulatory domain is found at 1-116; it reads MVVDDSAVVR…KQFLVDASDD (116 aa). D50 carries the post-translational modification 4-aspartylphosphate. One can recognise a CheB-type methylesterase domain in the interval 154-345; the sequence is LQTTERVVAL…AREIMAQMAG (192 aa). Catalysis depends on residues S166, H192, and D288.

It belongs to the CheB family. Post-translationally, phosphorylated by CheA. Phosphorylation of the N-terminal regulatory domain activates the methylesterase activity.

The protein localises to the cytoplasm. It carries out the reaction [protein]-L-glutamate 5-O-methyl ester + H2O = L-glutamyl-[protein] + methanol + H(+). The enzyme catalyses L-glutaminyl-[protein] + H2O = L-glutamyl-[protein] + NH4(+). Involved in chemotaxis. Part of a chemotaxis signal transduction system that modulates chemotaxis in response to various stimuli. Catalyzes the demethylation of specific methylglutamate residues introduced into the chemoreceptors (methyl-accepting chemotaxis proteins or MCP) by CheR. Also mediates the irreversible deamidation of specific glutamine residues to glutamic acid. This chain is Protein-glutamate methylesterase/protein-glutamine glutaminase 2, found in Albidiferax ferrireducens (strain ATCC BAA-621 / DSM 15236 / T118) (Rhodoferax ferrireducens).